We begin with the raw amino-acid sequence, 103 residues long: Small ribosomal subunit protein uS10 (103 aa).

This sequence belongs to the universal ribosomal protein uS10 family. As to quaternary structure, part of the 30S ribosomal subunit.

In terms of biological role, involved in the binding of tRNA to the ribosomes. The chain is Small ribosomal subunit protein uS10 from Neorickettsia sennetsu (strain ATCC VR-367 / Miyayama) (Ehrlichia sennetsu).